Reading from the N-terminus, the 826-residue chain is MLGLWLLSVLWTPAVAPGPPLPHVKQYEVVWPRRLAASRSRRALPSHWGQYPESLSYALGTSGHVFTLHLRKNRDLLGSSYTETYSAANGSEVTEQLQEQDHCLYQGHVEGYEGSAASISTCAGLRGFFRVGSTVHLIEPLDADEEGQHAMYQAKHLQQKAGTCGVKDTNLNDLGPRALEIYRAQPRNWLIPRETRYVELYVVADSQEFQKLGSREAVRQRVLEVVNHVDKLYQELSFRVVLVGLEIWNKDKFYISRYANVTLENFLSWREQNLQGQHPHDNVQLITGVDFIGSTVGLAKVSALCSRHSGAVNQDHSKNSIGVASTMAHELGHNLGMSHDEDIPGCYCPEPREGGGCIMTESIGSKFPRIFSRCSKIDLESFVTKPQTGCLTNVPDVNRFVGGPVCGNLFVEHGEQCDCGTPQDCQNPCCNATTCQLVKGAECASGTCCHECKVKPAGEVCRLSKDKCDLEEFCDGRKPTCPEDAFQQNGTPCPGGYCFDGSCPTLAQQCRDLWGPGARVAADSCYTFSIPPGCNGRMYSGRINRCGALYCEGGQKPLERSFCTFSSNHGVCHALGTGSNIDTFELVLQGTKCEEGKVCMDGSCQDLRVYRSENCSAKCNNHGVCNHKRECHCHKGWAPPNCVQRLADVSDEQAASTSLPVSVVVVLVILVAAMVIVAGIVIYRKAPRQIQRRSVAPKPISGLSNPLFYTRDSSLPAKNRPPDPSETVSTNQPPRPIVKPKRPPPAPPGAVSSSPLPVPVYAPKIPNQFRPDPPTKPLPELKPKQVKPTFAPPTPPVKPGTGGTVPGATQGAGEPKVALKVPIQKR.

An N-terminal signal peptide occupies residues 1–16 (MLGLWLLSVLWTPAVA). Residues 17-658 (PGPPLPHVKQ…VSDEQAASTS (642 aa)) lie on the Extracellular side of the membrane. Asparagine 89 and asparagine 260 each carry an N-linked (GlcNAc...) asparagine glycan. The Peptidase M12B domain occupies 196-395 (RYVELYVVAD…PQTGCLTNVP (200 aa)). Cystine bridges form between cysteine 305/cysteine 390, cysteine 346/cysteine 374, cysteine 348/cysteine 357, cysteine 430/cysteine 452, cysteine 443/cysteine 449, cysteine 461/cysteine 481, cysteine 468/cysteine 498, cysteine 493/cysteine 503, cysteine 563/cysteine 615, cysteine 615/cysteine 625, cysteine 619/cysteine 631, and cysteine 633/cysteine 642. Histidine 329 is a binding site for Zn(2+). Glutamate 330 is a catalytic residue. Zn(2+) is bound by residues histidine 333 and histidine 339. Positions 403–489 (GPVCGNLFVE…TCPEDAFQQN (87 aa)) constitute a Disintegrin domain. N-linked (GlcNAc...) asparagine glycosylation occurs at asparagine 431. An EGF-like domain is found at 611–643 (RSENCSAKCNNHGVCNHKRECHCHKGWAPPNCV). A glycan (N-linked (GlcNAc...) asparagine) is linked at asparagine 614. A helical membrane pass occupies residues 659–683 (LPVSVVVVLVILVAAMVIVAGIVIY). The Cytoplasmic segment spans residues 684-826 (RKAPRQIQRR…VALKVPIQKR (143 aa)). Residues 701 to 826 (SGLSNPLFYT…VALKVPIQKR (126 aa)) are disordered. A compositionally biased stretch (pro residues) spans 733–748 (PPRPIVKPKRPPPAPP). Positions 749-763 (GAVSSSPLPVPVYAP) are enriched in low complexity.

Interacts with FST3. Zn(2+) serves as cofactor. Macrophages.

Its subcellular location is the membrane. Possible involvement in extravasation of leukocytes. This chain is Disintegrin and metalloproteinase domain-containing protein 8 (Adam8), found in Mus musculus (Mouse).